The sequence spans 280 residues: Lysosome-associated membrane glycoprotein 5 (280 aa).

Residues 1–29 (MDLRVRTLLGGDRLRILLMFFHVMVQTVA) form the signal peptide. Over 30–235 (EQEVENLSGL…PVDEQEQLEE (206 aa)) the chain is Extracellular. Asn35, Asn53, Asn102, and Asn127 each carry an N-linked (GlcNAc...) asparagine glycan. Residues 236 to 256 (TLPLILGLILGLVIVITLVIY) traverse the membrane as a helical segment. The Cytoplasmic portion of the chain corresponds to 257–280 (HIHHKMTANQVQIPRDRSQYKHMG).

Belongs to the LAMP family. In terms of processing, glycosylated. In brain, strongly expressed in the globus pallidus/ventral pallidum complex, the substantia nigra pars reticulata and the entopeduncular nucleus (at protein level). Expressed in the external plexiform layer of the olfactory bulb (at protein level). May be weakly expressed in neocortex and striatum (at protein level). Highly expressed in brain; not detected in other tissues tested. Detected in the cingulate cortex, cortical plate and caudate putamen. In neocortex, specifically expressed in neurons of layers II/III and V.

It localises to the cytoplasmic vesicle membrane. The protein resides in the cell membrane. Its subcellular location is the cell projection. It is found in the dendrite. The protein localises to the cytoplasmic vesicle. It localises to the secretory vesicle. The protein resides in the synaptic vesicle membrane. Its subcellular location is the growth cone membrane. It is found in the early endosome membrane. The protein localises to the recycling endosome. It localises to the endoplasmic reticulum-Golgi intermediate compartment membrane. The protein resides in the endosome membrane. In terms of biological role, plays a role in short-term synaptic plasticity in a subset of GABAergic neurons in the brain. This is Lysosome-associated membrane glycoprotein 5 (Lamp5) from Mus musculus (Mouse).